Consider the following 273-residue polypeptide: Short-chain dehydrogenase fogB (273 aa).

Ile16, Asp66, Arg128, Tyr174, Lys178, Val207, and Thr209 together coordinate NADP(+). The active-site Proton donor is Tyr174. Residue Lys178 is the Lowers pKa of active site Tyr of the active site.

The protein belongs to the short-chain dehydrogenases/reductases (SDR) family.

Functionally, short-chain dehydrogenase; part of the gene cluster that mediates the biosynthesis of flavoglaucin and congeners (including aspergin, dihydroauroglaucin and auroglaucin), prenylated salicylaldehyde derivatives carrying a saturated or an unsaturated C-7 side chain. The PKS fogA releases the carboxylic acid (8E,10E,12E)-3,5,7-trihydroxytetradeca-8,10,12-trienoic acid as its product, as well as derivatives with one and two double bonds. FogA is indeed able to reduce the initial triketide, thus being at least partially responsible for the differently saturated heptyl side chains of flavoglaucin congeners. The oxidoreductases fogB, fogC and fogD modify the nascent polyketide in fogA-bound form and, together, fogA, fogB, fogC and fogD are necessary for the formation of the aromatic core and the cyclized PKS products are released as salicyl alcohols. In particular, fogB is responsible for oxidation of a hydroxyl group or reduction of remaining double bond(s) at the C-7 residue whereas fogD is probably involved in the reductive release of the modified PKS products. The cytochrome P450 monooxygenase fogE is then responsible for the hydroxylation at C-3 of the benzene ring. The fogE products are substrates of the prenyltransferase fogH and the prenylated benzyl alcohols are subsequently oxidized by the fogF to produce the final aryl aldehydes flavoglaucin and congeners. The short-chain dehydrogenase fogG does not seem to be involved in the biosynthesis of the prenylated salicylaldehyde derivatives. The chain is Short-chain dehydrogenase fogB from Aspergillus ruber (strain CBS 135680).